The sequence spans 120 residues: Large ribosomal subunit protein uL18 (120 aa).

The protein belongs to the universal ribosomal protein uL18 family. In terms of assembly, part of the 50S ribosomal subunit; part of the 5S rRNA/L5/L18/L25 subcomplex. Contacts the 5S and 23S rRNAs.

Its function is as follows. This is one of the proteins that bind and probably mediate the attachment of the 5S RNA into the large ribosomal subunit, where it forms part of the central protuberance. The polypeptide is Large ribosomal subunit protein uL18 (Trichodesmium erythraeum (strain IMS101)).